A 426-amino-acid polypeptide reads, in one-letter code: MLKAVILIGGPQKGTRFRPLSFEVPKPLFPVAGVPMVQHHIEACSKVPNLKEILLIGFYQPNEALSSFLLKAQQEFKVAIRYLQEYSALGTGGGIYHFRDQILSGGPQAFFVMNADVCSEFPLVPMLDFHKQHGGSQSYVILGTTANRTQSLNYGCIVSNGDTQEVLHYVEKPGTFVSDIINCGIYLFSPSIFQHIAEVFQRNQLELQLFSCISEENSSWQRTEVIRLEQDVFTTLAGHGKLYVYKTEGCWSQIKSAGSAIYASRLYLSQYSTTHPERLASTKEGGPTIRGNVYIHPTANVDPSAVLGPNVSVGMGVTVGAGVRIRESIILHGAVLQDHSCVLNTIVGWDSMVGRWARVEGTPSDPNPNDPYSKIDSETLFREGKLTPSITILGCNVSIPAEVVILNSIVLPHKELSRSFKNQIIL.

The protein belongs to the transferase hexapeptide repeat family.

The catalysed reaction is alpha-D-mannose 1-phosphate + GTP + H(+) = GDP-alpha-D-mannose + diphosphate. The protein operates within nucleotide-sugar biosynthesis; GDP-alpha-D-mannose biosynthesis; GDP-alpha-D-mannose from alpha-D-mannose 1-phosphate (GTP route): step 1/1. The protein is Mannose-1-phosphate guanyltransferase alpha-B (gmppa-b) of Xenopus laevis (African clawed frog).